We begin with the raw amino-acid sequence, 95 residues long: PqqA binding protein (95 aa).

Belongs to the PqqD family. Monomer. Interacts with PqqE.

It functions in the pathway cofactor biosynthesis; pyrroloquinoline quinone biosynthesis. Functionally, functions as a PqqA binding protein and presents PqqA to PqqE, in the pyrroloquinoline quinone (PQQ) biosynthetic pathway. In Rahnella aquatilis, this protein is PqqA binding protein.